The primary structure comprises 958 residues: SLIT and NTRK-like protein 5 (958 aa).

The signal sequence occupies residues 1 to 40 (MHTCCPPVTLEQDLHRKMHSWMLQTLAFAVTSLVLSCAET). At 41-664 (IDYYGEICDN…GGGASSVPLS (624 aa)) the chain is on the extracellular side. 6 LRR repeats span residues 82–103 (PIYH…EFVN), 106–127 (GASI…AFHG), 130–151 (GLRR…TFLG), 154–175 (NLEY…AFGK), 178–199 (LLQV…LFRF), and 201–222 (PLTH…GLLQ). A glycan (N-linked (GlcNAc...) asparagine) is linked at Asn103. The LRRCT 1 domain occupies 235 to 286 (NPWNCSCELISLKDWLDSISYSALVGDVVCETPFRLHGRDLDEVSKQELCPR). A disordered region spans residues 317-358 (ATSSSAVYKPPLKPPKGTRQPNKPRVRPTSRQPSKDLGYSNY). Residues 365–407 (QTKSPVPLECPTACSCNLQISDLGLNVNCQERKIESIAELQPK) enclose the LRRNT domain. 6 LRR repeats span residues 410–431 (NPKK…DFLE), 434–455 (GLDL…AFGD), 458–479 (NLRR…LFYG), 482–503 (SLQY…TFDP), 506–527 (NLQL…VFSG), and 529–550 (TLLR…GVLD). Positions 563–614 (NPWDCTCDIVGMKLWVEQLKVGVLVDEVICKAPKKFAETDMRSIKSELLCPD) constitute an LRRCT 2 domain. The N-linked (GlcNAc...) asparagine glycan is linked to Asn644. The helical transmembrane segment at 665–685 (VLILSLLLVFIMSVFVAAGLF) threads the bilayer. Residues 686-958 (VLVMKRRKKN…LEKQTTFSQF (273 aa)) are Cytoplasmic-facing. Residues 789-844 (NHHLQQQQQPPPPPQQPQQQPPPQLQLQPGEEERRESHHLRSPAYSVSTIEPREDL) form a disordered region. The segment covering 797 to 812 (QPPPPPQQPQQQPPPQ) has biased composition (pro residues).

It belongs to the SLITRK family. In terms of tissue distribution, expressed predominantly in the cerebral cortex of the brain but also at low levels in the spinal cord and medulla.

Its subcellular location is the membrane. Functionally, suppresses neurite outgrowth. The sequence is that of SLIT and NTRK-like protein 5 (SLITRK5) from Homo sapiens (Human).